A 196-amino-acid chain; its full sequence is Peptidyl-tRNA hydrolase (196 aa).

A tRNA-binding site is contributed by tyrosine 17. The active-site Proton acceptor is histidine 22. Residues phenylalanine 68, asparagine 70, and asparagine 116 each contribute to the tRNA site.

The protein belongs to the PTH family. As to quaternary structure, monomer.

The protein resides in the cytoplasm. The catalysed reaction is an N-acyl-L-alpha-aminoacyl-tRNA + H2O = an N-acyl-L-amino acid + a tRNA + H(+). Hydrolyzes ribosome-free peptidyl-tRNAs (with 1 or more amino acids incorporated), which drop off the ribosome during protein synthesis, or as a result of ribosome stalling. Its function is as follows. Catalyzes the release of premature peptidyl moieties from peptidyl-tRNA molecules trapped in stalled 50S ribosomal subunits, and thus maintains levels of free tRNAs and 50S ribosomes. This chain is Peptidyl-tRNA hydrolase, found in Serratia proteamaculans (strain 568).